A 368-amino-acid polypeptide reads, in one-letter code: Lipoyl synthase, chloroplastic (368 aa).

2 disordered regions span residues 1–30 (MQSS…RGSV) and 42–61 (PTVG…RDPE). Residues Cys94, Cys99, Cys105, Cys131, Cys135, Cys138, and Ser346 each coordinate [4Fe-4S] cluster. A Radical SAM core domain is found at 114–335 (GEGDGIATAT…KEYGESVGFR (222 aa)).

This sequence belongs to the radical SAM superfamily. Lipoyl synthase family. The cofactor is [4Fe-4S] cluster.

It localises to the plastid. The protein localises to the chloroplast. It carries out the reaction [[Fe-S] cluster scaffold protein carrying a second [4Fe-4S](2+) cluster] + N(6)-octanoyl-L-lysyl-[protein] + 2 oxidized [2Fe-2S]-[ferredoxin] + 2 S-adenosyl-L-methionine + 4 H(+) = [[Fe-S] cluster scaffold protein] + N(6)-[(R)-dihydrolipoyl]-L-lysyl-[protein] + 4 Fe(3+) + 2 hydrogen sulfide + 2 5'-deoxyadenosine + 2 L-methionine + 2 reduced [2Fe-2S]-[ferredoxin]. It participates in protein modification; protein lipoylation via endogenous pathway; protein N(6)-(lipoyl)lysine from octanoyl-[acyl-carrier-protein]: step 2/2. Catalyzes the radical-mediated insertion of two sulfur atoms into the C-6 and C-8 positions of the octanoyl moiety bound to the lipoyl domains of lipoate-dependent enzymes, thereby converting the octanoylated domains into lipoylated derivatives. The protein is Lipoyl synthase, chloroplastic of Sorghum bicolor (Sorghum).